Consider the following 393-residue polypeptide: Elongation factor Tu (393 aa).

The 199-residue stretch at 6–204 folds into the tr-type G domain; it reads KPHINVGTIG…ALEKIELPMR (199 aa). The tract at residues 15–22 is G1; the sequence is GHVDHGKT. 15-22 lines the GTP pocket; sequence GHVDHGKT. A Mg(2+)-binding site is contributed by Thr22. Residues 58–62 are G2; the sequence is GITIS. The segment at 79-82 is G3; that stretch reads DCPG. Residues 79–83 and 134–137 each bind GTP; these read DCPGH and NKCD. The segment at 134–137 is G4; it reads NKCD. Positions 172-174 are G5; the sequence is SAV.

Belongs to the TRAFAC class translation factor GTPase superfamily. Classic translation factor GTPase family. EF-Tu/EF-1A subfamily. In terms of assembly, monomer.

Its subcellular location is the cytoplasm. The catalysed reaction is GTP + H2O = GDP + phosphate + H(+). Functionally, GTP hydrolase that promotes the GTP-dependent binding of aminoacyl-tRNA to the A-site of ribosomes during protein biosynthesis. In Anaplasma phagocytophilum (strain HZ), this protein is Elongation factor Tu.